A 343-amino-acid chain; its full sequence is MMNENLDATGENFSPEEFDVERALRPLSFDDFAGQEQVLENLQIFVQAANLRGEALDHTLFHGPPGLGKTTLAHILANELNVGIKITSGPVLDKPGDLAGLLTNLDERDILFIDEIHRLSPIVEEYLYSAMEDYRIDIMIETGPNARTVQINLNPFTLIGATTRSGLLTAPMRARFGISSRLQYYSTELLSGIVERSSDILKVPITQDAAIEIAGRSRGTPRIANALLRRVRDFAQIKGNGKIDIEIAKFGLKALNVDAHGLDEMDNKILATIIDKFKGGPVGITTLATAVSESAETIEEVYEPFLIQQGFIYRTPRGREVTEHAYRHLGRVKGSNQGGLFDN.

A large ATPase domain (RuvB-L) region spans residues 1–185 (MMNENLDATG…FGISSRLQYY (185 aa)). Residues Leu-24, Arg-25, Gly-66, Lys-69, Thr-70, Thr-71, 132–134 (EDY), Arg-175, Tyr-185, and Arg-222 each bind ATP. Thr-70 provides a ligand contact to Mg(2+). Residues 186 to 256 (STELLSGIVE…IAKFGLKALN (71 aa)) are small ATPAse domain (RuvB-S). The head domain (RuvB-H) stretch occupies residues 259-343 (AHGLDEMDNK…GSNQGGLFDN (85 aa)). DNA is bound by residues Arg-314 and Arg-319.

This sequence belongs to the RuvB family. As to quaternary structure, homohexamer. Forms an RuvA(8)-RuvB(12)-Holliday junction (HJ) complex. HJ DNA is sandwiched between 2 RuvA tetramers; dsDNA enters through RuvA and exits via RuvB. An RuvB hexamer assembles on each DNA strand where it exits the tetramer. Each RuvB hexamer is contacted by two RuvA subunits (via domain III) on 2 adjacent RuvB subunits; this complex drives branch migration. In the full resolvosome a probable DNA-RuvA(4)-RuvB(12)-RuvC(2) complex forms which resolves the HJ.

It localises to the cytoplasm. It catalyses the reaction ATP + H2O = ADP + phosphate + H(+). The RuvA-RuvB-RuvC complex processes Holliday junction (HJ) DNA during genetic recombination and DNA repair, while the RuvA-RuvB complex plays an important role in the rescue of blocked DNA replication forks via replication fork reversal (RFR). RuvA specifically binds to HJ cruciform DNA, conferring on it an open structure. The RuvB hexamer acts as an ATP-dependent pump, pulling dsDNA into and through the RuvAB complex. RuvB forms 2 homohexamers on either side of HJ DNA bound by 1 or 2 RuvA tetramers; 4 subunits per hexamer contact DNA at a time. Coordinated motions by a converter formed by DNA-disengaged RuvB subunits stimulates ATP hydrolysis and nucleotide exchange. Immobilization of the converter enables RuvB to convert the ATP-contained energy into a lever motion, pulling 2 nucleotides of DNA out of the RuvA tetramer per ATP hydrolyzed, thus driving DNA branch migration. The RuvB motors rotate together with the DNA substrate, which together with the progressing nucleotide cycle form the mechanistic basis for DNA recombination by continuous HJ branch migration. Branch migration allows RuvC to scan DNA until it finds its consensus sequence, where it cleaves and resolves cruciform DNA. In Christiangramia forsetii (strain DSM 17595 / CGMCC 1.15422 / KT0803) (Gramella forsetii), this protein is Holliday junction branch migration complex subunit RuvB.